The primary structure comprises 265 residues: Metal-activated transcriptional activator protein AMT1 (265 aa).

The copper-fist DNA-binding region spans 1 to 40; that stretch reads MVVINGVKYACDSCIKSHKAAQCEHNDRPLKILKPRGRPP. Cys11, Cys14, Cys23, and His25 together coordinate Zn(2+). The tract at residues 103 to 129 is disordered; sequence RRKRTQKSNKKDNLSINSPTNNSPSPA. The segment covering 119–128 has biased composition (low complexity); it reads NSPTNNSPSP.

The protein resides in the nucleus. Functionally, trans-acting regulatory protein that activates transcription of the MT genes (metallothionein) in response to copper or silver ions. This is Metal-activated transcriptional activator protein AMT1 (AMT1) from Candida glabrata (strain ATCC 2001 / BCRC 20586 / JCM 3761 / NBRC 0622 / NRRL Y-65 / CBS 138) (Yeast).